A 278-amino-acid polypeptide reads, in one-letter code: NH(3)-dependent NAD(+) synthetase (278 aa).

Residue 43–50 (GISGGVDS) coordinates ATP. Asp49 is a binding site for Mg(2+). Arg146 provides a ligand contact to deamido-NAD(+). Position 166 (Thr166) interacts with ATP. Glu171 is a Mg(2+) binding site. The deamido-NAD(+) site is built by Lys179 and Asp186. ATP is bound by residues Lys195 and Thr217. 266 to 267 (HK) provides a ligand contact to deamido-NAD(+).

This sequence belongs to the NAD synthetase family. As to quaternary structure, homodimer.

It carries out the reaction deamido-NAD(+) + NH4(+) + ATP = AMP + diphosphate + NAD(+) + H(+). It functions in the pathway cofactor biosynthesis; NAD(+) biosynthesis; NAD(+) from deamido-NAD(+) (ammonia route): step 1/1. Catalyzes the ATP-dependent amidation of deamido-NAD to form NAD. Uses ammonia as a nitrogen source. The sequence is that of NH(3)-dependent NAD(+) synthetase from Pseudoalteromonas translucida (strain TAC 125).